We begin with the raw amino-acid sequence, 408 residues long: Potassium channel subfamily K member 13 (408 aa).

Topologically, residues 1–19 are cytoplasmic; the sequence is MAGRGFSWGPGHLNEDNAR. A helical membrane pass occupies residues 20–40; the sequence is FLLLAALIVLYLLGGAAVFSA. 2 N-linked (GlcNAc...) asparagine glycosylation sites follow: Asn59 and Asn65. An intramembrane region (pore-forming) is located at residues 95–115; the sequence is WDFTGAFYFVGTVVSTIGFGM. K(+) contacts are provided by Thr110, Ile111, and Gly112. The interval 110 to 115 is selectivity filter 1; the sequence is TIGFGM. Residues 125 to 145 form a helical membrane-spanning segment; sequence IFLIFYGLVGCSSTILFFNLF. Topologically, residues 146–193 are cytoplasmic; the sequence is LERLITIIAYIMKSCHQRQLRRRGALPQESLKDAGQCEVDSLAGWKPS. Residues 194–214 traverse the membrane as a helical segment; it reads VYYVMLILCTASILISCCASA. The segment at residues 224–244 is an intramembrane region (pore-forming); sequence YFDSLYFCFVAFSTIGFGDLV. Positions 237, 238, 239, and 240 each coordinate K(+). The interval 237–242 is selectivity filter 2; it reads TIGFGD. Residues 263–283 form a helical membrane-spanning segment; that stretch reads VFILMGVCCIYSLFNVISILI. Residues 284 to 408 lie on the Cytoplasmic side of the membrane; the sequence is KQSLNWILRK…NRLAETSGDR (125 aa).

The protein belongs to the two pore domain potassium channel (TC 1.A.1.8) family. In terms of assembly, homodimer. Heterodimer with KCNK12. In terms of tissue distribution, expressed in microglia (at protein level).

It localises to the cell membrane. The enzyme catalyses K(+)(in) = K(+)(out). The channel conductance is activated by arachidonic acid and inhibited by Ba(2+) ions, volatile anesthetics such as halothane and antiarrhythmic drugs mexiletine and lidocaine. Insensitive to extracellular pH change. K(+) channel that conducts outward rectifying tonic currents potentiated by purinergic signals. Homo- and heterodimerizes to form functional channels with distinct regulatory and gating properties. Contributes most of K(+) currents at the plasma membrane of resting microglia. Maintains a depolarized membrane potential required for proper ramified microglia morphology and phagocytosis, selectively mediating microglial pruning of presynaptic compartments at hippocampal excitatory synapses. Upon local release of ATP caused by neuronal injury or infection, it is potentiated by P2RY12 and P2RX7 receptor signaling and contributes to ATP-triggered K(+) efflux underlying microglial NLRP3 inflammasome assembly and IL1B release. This Homo sapiens (Human) protein is Potassium channel subfamily K member 13.